The primary structure comprises 478 residues: DNA-directed RNA polymerase subunit alpha (478 aa).

The alpha N-terminal domain (alpha-NTD) stretch occupies residues 1–341; sequence MNKKIQDFFL…LDCMRLLNYE (341 aa). The interval 365–478 is alpha C-terminal domain (alpha-CTD); the sequence is RFYNSREDKT…KLGSRNEKNL (114 aa).

This sequence belongs to the RNA polymerase alpha chain family. In plastids the minimal PEP RNA polymerase catalytic core is composed of four subunits: alpha, beta, beta', and beta''. When a (nuclear-encoded) sigma factor is associated with the core the holoenzyme is formed, which can initiate transcription.

The protein localises to the plastid. Its subcellular location is the chloroplast. It carries out the reaction RNA(n) + a ribonucleoside 5'-triphosphate = RNA(n+1) + diphosphate. DNA-dependent RNA polymerase catalyzes the transcription of DNA into RNA using the four ribonucleoside triphosphates as substrates. The polypeptide is DNA-directed RNA polymerase subunit alpha (rpoA) (Tetradesmus obliquus (Green alga)).